The chain runs to 129 residues: Fluoride-specific ion channel FluC 1 (129 aa).

Helical transmembrane passes span leucine 9–tryptophan 29, glycine 33–valine 53, leucine 62–leucine 82, and isoleucine 98–glycine 118. 2 residues coordinate Na(+): glycine 72 and threonine 75.

It belongs to the fluoride channel Fluc/FEX (TC 1.A.43) family.

It is found in the cell membrane. It carries out the reaction fluoride(in) = fluoride(out). Its activity is regulated as follows. Na(+) is not transported, but it plays an essential structural role and its presence is essential for fluoride channel function. Fluoride-specific ion channel. Important for reducing fluoride concentration in the cell, thus reducing its toxicity. The sequence is that of Fluoride-specific ion channel FluC 1 from Lactobacillus johnsonii (strain CNCM I-12250 / La1 / NCC 533).